Here is a 90-residue protein sequence, read N- to C-terminus: MNSKLSLPGKNLKMQKRRWKPTRMMLTRAHYRVDGQLCQHWRTNWQTSRGSLQIWCQVKKWVKSLLTRLGLSRMITSRRDQAFDMEMSLM.

The nucleolar signal stretch occupies residues 4 to 29; it reads KLSLPGKNLKMQKRRWKPTRMMLTRA.

It belongs to the hantavirus NS-S protein family. In terms of assembly, interacts with host MAVS; this interaction may reduce MAVS ubiquitination.

The protein localises to the host cytoplasm. It is found in the host perinuclear region. The protein resides in the host nucleus. Its function is as follows. Antagonizes host type-I IFN signaling pathway. The chain is Non-structural protein NS-S (N) from Homo sapiens (Human).